Here is a 349-residue protein sequence, read N- to C-terminus: Ferredoxin--NADP reductase 3 (349 aa).

7 residues coordinate FAD: Glu-34, Lys-42, Tyr-46, Val-86, Ile-120, Asp-287, and Ser-328.

The protein belongs to the ferredoxin--NADP reductase type 2 family. In terms of assembly, homodimer. Requires FAD as cofactor.

It carries out the reaction 2 reduced [2Fe-2S]-[ferredoxin] + NADP(+) + H(+) = 2 oxidized [2Fe-2S]-[ferredoxin] + NADPH. The chain is Ferredoxin--NADP reductase 3 from Lysinibacillus sphaericus (strain C3-41).